Reading from the N-terminus, the 233-residue chain is Tapetum-specific methyltransferase 1 (233 aa).

Lys-8 provides a ligand contact to substrate. S-adenosyl-L-methionine-binding positions include Val-52, Glu-74, 76-77 (GV), Ser-82, Asp-100, and Ala-129. Asp-150 provides a ligand contact to substrate. Asp-150 lines the a divalent metal cation pocket. Asp-152 contacts S-adenosyl-L-methionine. The a divalent metal cation site is built by Asp-176 and Asn-177.

This sequence belongs to the class I-like SAM-binding methyltransferase superfamily. Cation-dependent O-methyltransferase family. CCoAMT subfamily. A divalent metal cation is required as a cofactor. Expressed in inflorescences and flower buds. Not detected in roots, leaves or stems. Located exclusively in the tapetum of developing stamen.

It participates in aromatic compound metabolism; phenylpropanoid biosynthesis. Its function is as follows. Methyltransferase involved in phenylpropanoid polyamine conjugate biosynthesis. In vivo, methylates only one of the 5-hydroxyferuloyl moieties of N1,N5,N10-tri-(hydroxyferuloyl)-spermidine, while is able in vitro to convert all three 5-hydroxyferuloyl residues to the corresponding sinapoyl moieties and to methylate caffeoyl CoA and tricaffeoyl spermidine. This is Tapetum-specific methyltransferase 1 (TSM1) from Arabidopsis thaliana (Mouse-ear cress).